The chain runs to 100 residues: UPF0213 protein YhbQ (100 aa).

The GIY-YIG domain maps to 2-77 (TPWFLYLIRT…KQLTKRQKER (76 aa)).

It belongs to the UPF0213 family.

The sequence is that of UPF0213 protein YhbQ from Shigella dysenteriae serotype 1 (strain Sd197).